The sequence spans 174 residues: Crossover junction endodeoxyribonuclease RuvC (174 aa).

Active-site residues include aspartate 8, glutamate 68, and aspartate 140. Mg(2+) contacts are provided by aspartate 8, glutamate 68, and aspartate 140.

Belongs to the RuvC family. As to quaternary structure, homodimer which binds Holliday junction (HJ) DNA. The HJ becomes 2-fold symmetrical on binding to RuvC with unstacked arms; it has a different conformation from HJ DNA in complex with RuvA. In the full resolvosome a probable DNA-RuvA(4)-RuvB(12)-RuvC(2) complex forms which resolves the HJ. The cofactor is Mg(2+).

It is found in the cytoplasm. It catalyses the reaction Endonucleolytic cleavage at a junction such as a reciprocal single-stranded crossover between two homologous DNA duplexes (Holliday junction).. Functionally, the RuvA-RuvB-RuvC complex processes Holliday junction (HJ) DNA during genetic recombination and DNA repair. Endonuclease that resolves HJ intermediates. Cleaves cruciform DNA by making single-stranded nicks across the HJ at symmetrical positions within the homologous arms, yielding a 5'-phosphate and a 3'-hydroxyl group; requires a central core of homology in the junction. The consensus cleavage sequence is 5'-(A/T)TT(C/G)-3'. Cleavage occurs on the 3'-side of the TT dinucleotide at the point of strand exchange. HJ branch migration catalyzed by RuvA-RuvB allows RuvC to scan DNA until it finds its consensus sequence, where it cleaves and resolves the cruciform DNA. The sequence is that of Crossover junction endodeoxyribonuclease RuvC from Legionella pneumophila (strain Lens).